Reading from the N-terminus, the 899-residue chain is Origin recognition complex subunit 5 (899 aa).

Disordered stretches follow at residues 27-47, 100-166, and 194-238; these read FSSP…NDDT, DRIN…EYKD, and KNLE…DGNL. Residues 105-160 are compositionally biased toward acidic residues; the sequence is SEEETNINDDNNDDNNGDYDDDNNSDDDDDNDDNNNNDDNNNDDDEDVDDFEDIKE. The span at 207–218 shows a compositional bias: low complexity; the sequence is SSDNSMTSSSEE. Basic and acidic residues predominate over residues 227-237; it reads ESDKESDKDGN. Residue 303–310 participates in ATP binding; the sequence is GLPGMGKT. The tract at residues 409–469 is disordered; the sequence is KRTTENIRSP…NNNSNNVRFN (61 aa). The span at 455-469 shows a compositional bias: low complexity; it reads KNNFNNNNSNNVRFN.

The protein belongs to the ORC5 family. In terms of assembly, component of the origin recognition complex (ORC). Interacts with PCNA1; the interaction occurs during the trophozoite stage but not at the late schizont stage.

It localises to the nucleus. The enzyme catalyses ATP + H2O = ADP + phosphate + H(+). Functionally, component of the origin recognition complex (ORC) that binds origins of replication. This is Origin recognition complex subunit 5 from Plasmodium falciparum (isolate 3D7).